Reading from the N-terminus, the 607-residue chain is Proteasome-associated ATPase (607 aa).

Residues 1–17 (MTESDRHDTPKGDRRIS) show a composition bias toward basic and acidic residues. Residues 1–65 (MTESDRHDTP…GRPAADNKEL (65 aa)) form a disordered region. A coiled-coil region spans residues 59–102 (AADNKELQERVDNLTARNAKLLDTLKDARQQLVALREEVDRLGQ). 294 to 299 (GCGKTL) serves as a coordination point for ATP. Residues 606–607 (YL) form a docks into pockets in the proteasome alpha-ring region.

It belongs to the AAA ATPase family. As to quaternary structure, homohexamer. Assembles into a hexameric ring structure that caps the 20S proteasome core. Strongly interacts with the prokaryotic ubiquitin-like protein Pup through a hydrophobic interface; the interacting region of ARC lies in its N-terminal coiled-coil domain. There is one Pup binding site per ARC hexamer ring. Upon ATP-binding, the C-terminus of ARC interacts with the alpha-rings of the proteasome core, possibly by binding to the intersubunit pockets.

The protein operates within protein degradation; proteasomal Pup-dependent pathway. In terms of biological role, ATPase which is responsible for recognizing, binding, unfolding and translocation of pupylated proteins into the bacterial 20S proteasome core particle. May be essential for opening the gate of the 20S proteasome via an interaction with its C-terminus, thereby allowing substrate entry and access to the site of proteolysis. Thus, the C-termini of the proteasomal ATPase may function like a 'key in a lock' to induce gate opening and therefore regulate proteolysis. The chain is Proteasome-associated ATPase from Gordonia bronchialis (strain ATCC 25592 / DSM 43247 / BCRC 13721 / JCM 3198 / KCTC 3076 / NBRC 16047 / NCTC 10667) (Rhodococcus bronchialis).